A 422-amino-acid chain; its full sequence is Serine--tRNA ligase (422 aa).

230–232 serves as a coordination point for L-serine; it reads TAE. 261-263 serves as a coordination point for ATP; the sequence is RNE. Position 284 (glutamate 284) interacts with L-serine. 347 to 350 is a binding site for ATP; the sequence is EVSS. Serine 383 provides a ligand contact to L-serine.

The protein belongs to the class-II aminoacyl-tRNA synthetase family. Type-1 seryl-tRNA synthetase subfamily. In terms of assembly, homodimer. The tRNA molecule binds across the dimer.

The protein resides in the cytoplasm. It carries out the reaction tRNA(Ser) + L-serine + ATP = L-seryl-tRNA(Ser) + AMP + diphosphate + H(+). The enzyme catalyses tRNA(Sec) + L-serine + ATP = L-seryl-tRNA(Sec) + AMP + diphosphate + H(+). Its pathway is aminoacyl-tRNA biosynthesis; selenocysteinyl-tRNA(Sec) biosynthesis; L-seryl-tRNA(Sec) from L-serine and tRNA(Sec): step 1/1. Functionally, catalyzes the attachment of serine to tRNA(Ser). Is also able to aminoacylate tRNA(Sec) with serine, to form the misacylated tRNA L-seryl-tRNA(Sec), which will be further converted into selenocysteinyl-tRNA(Sec). This is Serine--tRNA ligase from Herpetosiphon aurantiacus (strain ATCC 23779 / DSM 785 / 114-95).